We begin with the raw amino-acid sequence, 305 residues long: Myb-like transcriptional regulator basR (305 aa).

Myb-like domains lie at 5 to 59, 60 to 110, and 111 to 162; these read RRRW…YNRF, TGGL…HHCL, and NPEL…TILS. A disordered region spans residues 175 to 215; it reads PCCDSPSPSKSSRRPPSTPTSTPQVPGSRQGSSYDPYDYGS. Residues 198–207 are compositionally biased toward polar residues; sequence QVPGSRQGSS.

It is found in the nucleus. Functionally, transcription regulator that acts as a central regulatory node for the integration of external bacterial signals leading to the regulation of secondary metabolite gene clusters such as orsellinic, lecanoric acid, cichorine, 2,4-dihydroxy-3-methyl-6-(2-oxopropyl)benzaldehyde (dba), emericellamide or microperfuranone clusters. The sequence is that of Myb-like transcriptional regulator basR from Emericella nidulans (strain FGSC A4 / ATCC 38163 / CBS 112.46 / NRRL 194 / M139) (Aspergillus nidulans).